The sequence spans 162 residues: SsrA-binding protein (162 aa).

Residues 140–162 (DKRETAAKRDWSRQKSRLMKDHG) are disordered.

This sequence belongs to the SmpB family.

Its subcellular location is the cytoplasm. Its function is as follows. Required for rescue of stalled ribosomes mediated by trans-translation. Binds to transfer-messenger RNA (tmRNA), required for stable association of tmRNA with ribosomes. tmRNA and SmpB together mimic tRNA shape, replacing the anticodon stem-loop with SmpB. tmRNA is encoded by the ssrA gene; the 2 termini fold to resemble tRNA(Ala) and it encodes a 'tag peptide', a short internal open reading frame. During trans-translation Ala-aminoacylated tmRNA acts like a tRNA, entering the A-site of stalled ribosomes, displacing the stalled mRNA. The ribosome then switches to translate the ORF on the tmRNA; the nascent peptide is terminated with the 'tag peptide' encoded by the tmRNA and targeted for degradation. The ribosome is freed to recommence translation, which seems to be the essential function of trans-translation. The polypeptide is SsrA-binding protein (Roseobacter denitrificans (strain ATCC 33942 / OCh 114) (Erythrobacter sp. (strain OCh 114))).